The sequence spans 22 residues: Large ribosomal subunit protein bL32 (22 aa).

The interval 1–22 (CVQQNKKSRSARDMXXSXDALE) is disordered. Residues 13 to 22 (DMXXSXDALE) show a composition bias toward low complexity.

Belongs to the bacterial ribosomal protein bL32 family.

This is Large ribosomal subunit protein bL32 (rpmF) from Ectopseudomonas mendocina (Pseudomonas mendocina).